The following is a 131-amino-acid chain: Profilin-2 (131 aa).

Cys13 and Cys115 are disulfide-bonded. The short motif at 81–97 (AVIRGKKGSGGITVKKT) is the Involved in PIP2 interaction element. The residue at position 111 (Thr111) is a Phosphothreonine.

Belongs to the profilin family. In terms of assembly, occurs in many kinds of cells as a complex with monomeric actin in a 1:1 ratio. In terms of processing, phosphorylated by MAP kinases. Pollen specific.

The protein resides in the cytoplasm. Its subcellular location is the cytoskeleton. In terms of biological role, binds to actin and affects the structure of the cytoskeleton. At high concentrations, profilin prevents the polymerization of actin, whereas it enhances it at low concentrations. By binding to PIP2, it inhibits the formation of IP3 and DG. This is Profilin-2 (PRO2) from Zea mays (Maize).